Reading from the N-terminus, the 326-residue chain is MRVLVVGGTGTLGRQIVRQAIDQGHTVVCLVRSLRKAAFLKEWGATIVGGNICKPETLSPALENIDAVIDASTARATDSLTIRQVDWEGKLNLIRAVQKAGIKKFVFFSILRAAEYPKVPLMDIKNCTEKFLAQTNLDYTILQLAGFMQGLIGQYAIPILDNQSVWQTGENTPIAYMNTQDVAKFAVRAVELDSVARKTYPVVGSRAWGATEIIQLCERMSGNNARISQVPMAVLRFMRSFTRFFQWTYNASDRLAFSEVLASGKALTADMAPVYEQFGLDPKETTTLESYLQEYFGRIIKKLKELDYEVNPTQTEGKKKKNNFFF.

The protein belongs to the NmrA-type oxidoreductase family. Ycf39 subfamily. Purified in several chlorophyll- and carotenoid-containing complexes, including photosystem II (PSII) assembly intermediate complex RCII* (iD1, D1, D2, PsbE, PsbF, PsbI, Ycf39, Ycf48, HliC and HliD) and the Ycf39-Hlip complex (Ycf39, HliC, HliD and pigments). Tagged protein does not pull down mature PSII.

The protein localises to the cellular thylakoid membrane. Functionally, requires HliD to bind pigments. The Ycf39-Hlip complex binds D1 at an early stage of PSII assembly along with Ycf48, ribosomes and ChlG, the last enzyme in chlorophyll biosynthesis; it may be involved in chlorophyll reuse and delivery to D1 in the initial stages of PSII assembly. The Ycf39-Hlip complex efficiently quenches chlorophyll fluorescence, contributing to photoprotection. This chain is Photosystem II assembly factor Ycf39, found in Synechocystis sp. (strain ATCC 27184 / PCC 6803 / Kazusa).